A 191-amino-acid chain; its full sequence is Divergent paired-related homeobox (191 aa).

Over residues 1 to 15 (MPGSEDLRKGKDQMH) the composition is skewed to basic and acidic residues. Residues 1 to 20 (MPGSEDLRKGKDQMHSHRKR) form a disordered region. The segment at residues 16–75 (SHRKRTMFTKKQLEDLNILFNENPYPNPSLQKEMASKIDIHPTVLQVWFKNHRAKLKKAK) is a DNA-binding region (homeobox).

Belongs to the paired homeobox family.

The protein resides in the nucleus. Its function is as follows. Transcription factor that acts as a repressor. The sequence is that of Divergent paired-related homeobox from Homo sapiens (Human).